We begin with the raw amino-acid sequence, 130 residues long: Phosphomevalonate dehydratase small subunit (130 aa).

Ser62 (proton acceptor) is an active-site residue.

It belongs to the AcnX type II small subunit family. In terms of assembly, heterodimer composed of a large subunit (PMDh-L) and a small subunit (PMDh-S).

It catalyses the reaction (R)-5-phosphomevalonate = (2E)-3-methyl-5-phosphooxypent-2-enoate + H2O. Its pathway is isoprenoid biosynthesis; isopentenyl diphosphate biosynthesis via mevalonate pathway. Functionally, component of a hydro-lyase that catalyzes the dehydration of mevalonate 5-phosphate (MVA5P) to form trans-anhydromevalonate 5-phosphate (tAHMP). Involved in the archaeal mevalonate (MVA) pathway, which provides fundamental precursors for isoprenoid biosynthesis, such as isopentenyl diphosphate (IPP) and dimethylallyl diphosphate (DMAPP). In Pyrococcus abyssi (strain GE5 / Orsay), this protein is Phosphomevalonate dehydratase small subunit.